Here is a 216-residue protein sequence, read N- to C-terminus: Large ribosomal subunit protein uL24m (216 aa).

A mitochondrion-targeting transit peptide spans 1–9 (MRLSALLAL). At Ser24 the chain carries Phosphoserine. The region spanning 56–89 (LFCGDTVEILEGKDAGKQGKVVQVIRQRNWVVVG) is the KOW domain.

It belongs to the universal ribosomal protein uL24 family. As to quaternary structure, component of the mitochondrial large ribosomal subunit (mt-LSU). Mature mammalian 55S mitochondrial ribosomes consist of a small (28S) and a large (39S) subunit. The 28S small subunit contains a 12S ribosomal RNA (12S mt-rRNA) and 30 different proteins. The 39S large subunit contains a 16S rRNA (16S mt-rRNA), a copy of mitochondrial valine transfer RNA (mt-tRNA(Val)), which plays an integral structural role, and 52 different proteins.

Its subcellular location is the mitochondrion. The protein is Large ribosomal subunit protein uL24m (MRPL24) of Homo sapiens (Human).